The primary structure comprises 456 residues: MSSHAMSVVILAAGKGTRMYSDLPKVLHTLAGKPMVQHVIDAAKHVGAQHIHLVYGHGGDLLQSTLKDASLNWVLQAEQLGTGHAMQQAAPFFSDDEDVLMLYGDVPLISVDTLQQLCAAKPQGGIGLLTVKLDDPTGYGRITRENGNVSGIVEHKDASDEQRQINEINTGILVANGADLKRWLAKLDNNNAQGEYYITDIIAMAWNEGREIAAVHPQRLSEVEGVNNRLQLARLEHVYQAEQAEKLLLAGVMLRDPARFDLRGTLQHGRDVEIDANVIIEGDVVLGNRVKIGAGCVIKNSVIGDDCEISPYSVVEDALLDTACTIGPFARLRPGAELLEGAHVGNFVEMKKARLGKGSKAGHLTYLGDAEIGDNVNIGAGTITCNYDGANKHKTIIGDDVFVGSDTQLVAPVTVAKGATIAAGTTVTRNIAENELVLTRVPQVHKQGWRRPVKKK.

The pyrophosphorylase stretch occupies residues M1–R229. UDP-N-acetyl-alpha-D-glucosamine-binding positions include L11–G14, K25, Q76, G81–T82, Y103–D105, G140, E154, N169, and N227. Residue D105 participates in Mg(2+) binding. Position 227 (N227) interacts with Mg(2+). The tract at residues L230–A250 is linker. The tract at residues G251–K456 is N-acetyltransferase. Residues R333 and K351 each contribute to the UDP-N-acetyl-alpha-D-glucosamine site. H363 serves as the catalytic Proton acceptor. Y366 and N377 together coordinate UDP-N-acetyl-alpha-D-glucosamine. Acetyl-CoA-binding positions include A380, N386–Y387, S405, A423, and R440.

In the N-terminal section; belongs to the N-acetylglucosamine-1-phosphate uridyltransferase family. This sequence in the C-terminal section; belongs to the transferase hexapeptide repeat family. Homotrimer. Mg(2+) serves as cofactor.

Its subcellular location is the cytoplasm. The enzyme catalyses alpha-D-glucosamine 1-phosphate + acetyl-CoA = N-acetyl-alpha-D-glucosamine 1-phosphate + CoA + H(+). The catalysed reaction is N-acetyl-alpha-D-glucosamine 1-phosphate + UTP + H(+) = UDP-N-acetyl-alpha-D-glucosamine + diphosphate. Its pathway is nucleotide-sugar biosynthesis; UDP-N-acetyl-alpha-D-glucosamine biosynthesis; N-acetyl-alpha-D-glucosamine 1-phosphate from alpha-D-glucosamine 6-phosphate (route II): step 2/2. The protein operates within nucleotide-sugar biosynthesis; UDP-N-acetyl-alpha-D-glucosamine biosynthesis; UDP-N-acetyl-alpha-D-glucosamine from N-acetyl-alpha-D-glucosamine 1-phosphate: step 1/1. It participates in bacterial outer membrane biogenesis; LPS lipid A biosynthesis. Functionally, catalyzes the last two sequential reactions in the de novo biosynthetic pathway for UDP-N-acetylglucosamine (UDP-GlcNAc). The C-terminal domain catalyzes the transfer of acetyl group from acetyl coenzyme A to glucosamine-1-phosphate (GlcN-1-P) to produce N-acetylglucosamine-1-phosphate (GlcNAc-1-P), which is converted into UDP-GlcNAc by the transfer of uridine 5-monophosphate (from uridine 5-triphosphate), a reaction catalyzed by the N-terminal domain. The protein is Bifunctional protein GlmU of Cronobacter sakazakii (strain ATCC BAA-894) (Enterobacter sakazakii).